We begin with the raw amino-acid sequence, 224 residues long: Cytidylate kinase (224 aa).

11–19 (GPAGAGKST) serves as a coordination point for ATP.

Belongs to the cytidylate kinase family. Type 1 subfamily.

Its subcellular location is the cytoplasm. The enzyme catalyses CMP + ATP = CDP + ADP. The catalysed reaction is dCMP + ATP = dCDP + ADP. In Exiguobacterium sp. (strain ATCC BAA-1283 / AT1b), this protein is Cytidylate kinase.